The following is a 389-amino-acid chain: Aromatic-amino-acid aminotransferase 2 (389 aa).

An N6-(pyridoxal phosphate)lysine modification is found at K233.

This sequence belongs to the class-I pyridoxal-phosphate-dependent aminotransferase family. As to quaternary structure, homodimer. Requires pyridoxal 5'-phosphate as cofactor.

The catalysed reaction is an aromatic L-alpha-amino acid + 2-oxoglutarate = an aromatic oxo-acid + L-glutamate. In terms of biological role, catalyzes the transamination of phenylalanine, tyrosine and tryptophan. Shows virtually no activity towards aspartic acid, alanine, valine or isoleucine. This chain is Aromatic-amino-acid aminotransferase 2, found in Thermococcus litoralis (strain ATCC 51850 / DSM 5473 / JCM 8560 / NS-C).